A 513-amino-acid polypeptide reads, in one-letter code: ATP synthase subunit alpha (513 aa).

169–176 (GDRQTGKT) contributes to the ATP binding site.

Belongs to the ATPase alpha/beta chains family. F-type ATPases have 2 components, CF(1) - the catalytic core - and CF(0) - the membrane proton channel. CF(1) has five subunits: alpha(3), beta(3), gamma(1), delta(1), epsilon(1). CF(0) has three main subunits: a(1), b(2) and c(9-12). The alpha and beta chains form an alternating ring which encloses part of the gamma chain. CF(1) is attached to CF(0) by a central stalk formed by the gamma and epsilon chains, while a peripheral stalk is formed by the delta and b chains.

It localises to the cell inner membrane. The catalysed reaction is ATP + H2O + 4 H(+)(in) = ADP + phosphate + 5 H(+)(out). Produces ATP from ADP in the presence of a proton gradient across the membrane. The alpha chain is a regulatory subunit. This chain is ATP synthase subunit alpha, found in Citrobacter koseri (strain ATCC BAA-895 / CDC 4225-83 / SGSC4696).